The following is a 261-amino-acid chain: MWFLVLCLDLSLGETGALPPIQSRIIGGWECEKHSKPWQVAVYHQGHFQCGGVLVHPQWVLTAAHCMSDDYQIWLGRHNLSEDEDTAQFHQVSDSFLDPQFDLSLLKKKYLRPYDDISHDLMLLRLAQPARITDAVKILDLPTQEPKLGSTCYTSGWGLISTFTNRGSGTLQCVELRLQSNEKCARAYPEKMTEFVLCATHRDDSGSICLGDSGGALICDGVFQGITSWGYSECADFNDNFVFTKVMPHLKWIKETIEKNS.

An N-terminal signal peptide occupies residues 1–17 (MWFLVLCLDLSLGETGA). The propeptide at 18-24 (LPPIQSR) is activation peptide. The Peptidase S1 domain maps to 25–258 (IIGGWECEKH…HLKWIKETIE (234 aa)). 5 cysteine pairs are disulfide-bonded: cysteine 31–cysteine 173, cysteine 50–cysteine 66, cysteine 152–cysteine 219, cysteine 184–cysteine 198, and cysteine 209–cysteine 234. The active-site Charge relay system is histidine 65. Asparagine 79 carries an N-linked (GlcNAc...) asparagine glycan. Aspartate 120 acts as the Charge relay system in catalysis. Catalysis depends on serine 213, which acts as the Charge relay system.

The protein belongs to the peptidase S1 family. Kallikrein subfamily. As to expression, detected in prostate and semen.

The protein resides in the secreted. The catalysed reaction is Preferential cleavage of Arg-|-Xaa bonds in small molecule substrates. Highly selective action to release kallidin (lysyl-bradykinin) from kininogen involves hydrolysis of Met-|-Xaa or Leu-|-Xaa.. Its function is as follows. Glandular kallikreins cleave Met-Lys and Arg-Ser bonds in kininogen to release Lys-bradykinin. The polypeptide is Kallikrein-1E2 (KLK1E2) (Equus caballus (Horse)).